Consider the following 521-residue polypeptide: Ribonuclease Y 1 (521 aa).

The helical transmembrane segment at 1 to 21 threads the bilayer; sequence MEIVISAIIGLLIGGTVVFVI. Residues 51 to 87 form a disordered region; it reads IKKESENKAKDFESRARKNVEQDIHKQKSTLKNKESQ. Positions 211-271 constitute a KH domain; the sequence is TVSVLALPND…VRRELARRTI (61 aa). The HD domain maps to 337 to 430; it reads ALNQSLEVAT…VHAAYTLSSS (94 aa).

It belongs to the RNase Y family.

It is found in the cell membrane. Endoribonuclease that initiates mRNA decay. This is Ribonuclease Y 1 from Bdellovibrio bacteriovorus (strain ATCC 15356 / DSM 50701 / NCIMB 9529 / HD100).